Here is a 101-residue protein sequence, read N- to C-terminus: Urease subunit beta (101 aa).

Belongs to the urease beta subunit family. Heterotrimer of UreA (gamma), UreB (beta) and UreC (alpha) subunits. Three heterotrimers associate to form the active enzyme.

It localises to the cytoplasm. The enzyme catalyses urea + 2 H2O + H(+) = hydrogencarbonate + 2 NH4(+). Its pathway is nitrogen metabolism; urea degradation; CO(2) and NH(3) from urea (urease route): step 1/1. This is Urease subunit beta from Stutzerimonas stutzeri (strain A1501) (Pseudomonas stutzeri).